The following is a 430-amino-acid chain: Adenylosuccinate synthetase (430 aa).

GTP contacts are provided by residues Gly-12–Lys-18 and Gly-40–Thr-42. Asp-13 (proton acceptor) is an active-site residue. Mg(2+) is bound by residues Asp-13 and Gly-40. Residues Asp-13–Lys-16, Asn-38–His-41, Thr-130, Arg-144, Gln-224, Thr-239, and Arg-303 each bind IMP. Residue His-41 is the Proton donor of the active site. Thr-299–Arg-305 lines the substrate pocket. GTP-binding positions include Arg-305, Lys-331–Asp-333, and Ser-413–Ser-415.

This sequence belongs to the adenylosuccinate synthetase family. Homodimer. Requires Mg(2+) as cofactor.

It localises to the cytoplasm. It catalyses the reaction IMP + L-aspartate + GTP = N(6)-(1,2-dicarboxyethyl)-AMP + GDP + phosphate + 2 H(+). It participates in purine metabolism; AMP biosynthesis via de novo pathway; AMP from IMP: step 1/2. Its function is as follows. Plays an important role in the de novo pathway of purine nucleotide biosynthesis. Catalyzes the first committed step in the biosynthesis of AMP from IMP. In Methylorubrum extorquens (strain CM4 / NCIMB 13688) (Methylobacterium extorquens), this protein is Adenylosuccinate synthetase.